Reading from the N-terminus, the 235-residue chain is ATP phosphoribosyltransferase (235 aa).

Belongs to the ATP phosphoribosyltransferase family. Short subfamily. In terms of assembly, heteromultimer composed of HisG and HisZ subunits.

Its subcellular location is the cytoplasm. It carries out the reaction 1-(5-phospho-beta-D-ribosyl)-ATP + diphosphate = 5-phospho-alpha-D-ribose 1-diphosphate + ATP. It participates in amino-acid biosynthesis; L-histidine biosynthesis; L-histidine from 5-phospho-alpha-D-ribose 1-diphosphate: step 1/9. Its function is as follows. Catalyzes the condensation of ATP and 5-phosphoribose 1-diphosphate to form N'-(5'-phosphoribosyl)-ATP (PR-ATP). Has a crucial role in the pathway because the rate of histidine biosynthesis seems to be controlled primarily by regulation of HisG enzymatic activity. The chain is ATP phosphoribosyltransferase from Synechococcus sp. (strain JA-2-3B'a(2-13)) (Cyanobacteria bacterium Yellowstone B-Prime).